The sequence spans 372 residues: 4-hydroxy-3-methylbut-2-en-1-yl diphosphate synthase (flavodoxin) (372 aa).

[4Fe-4S] cluster-binding residues include Cys-270, Cys-273, Cys-305, and Glu-312.

The protein belongs to the IspG family. [4Fe-4S] cluster serves as cofactor.

It catalyses the reaction (2E)-4-hydroxy-3-methylbut-2-enyl diphosphate + oxidized [flavodoxin] + H2O + 2 H(+) = 2-C-methyl-D-erythritol 2,4-cyclic diphosphate + reduced [flavodoxin]. It participates in isoprenoid biosynthesis; isopentenyl diphosphate biosynthesis via DXP pathway; isopentenyl diphosphate from 1-deoxy-D-xylulose 5-phosphate: step 5/6. In terms of biological role, converts 2C-methyl-D-erythritol 2,4-cyclodiphosphate (ME-2,4cPP) into 1-hydroxy-2-methyl-2-(E)-butenyl 4-diphosphate. This is 4-hydroxy-3-methylbut-2-en-1-yl diphosphate synthase (flavodoxin) from Escherichia coli (strain SMS-3-5 / SECEC).